The sequence spans 195 residues: Small ribosomal subunit protein uS4 (195 aa).

The region spanning 109–183 (RRLQTQVFKL…VKRKNLKKNQ (75 aa)) is the S4 RNA-binding domain. The disordered stretch occupies residues 165 to 195 (PFGGGRPGRVKRKNLKKNQGGGGGAAEEEED).

This sequence belongs to the universal ribosomal protein uS4 family. Component of the small ribosomal subunit. Identified in a IGF2BP1-dependent mRNP granule complex containing untranslated mRNAs. Part of the small subunit (SSU) processome, composed of more than 70 proteins and the RNA chaperone small nucleolar RNA (snoRNA) U3.

The protein resides in the cytoplasm. The protein localises to the nucleus. It localises to the nucleolus. Its function is as follows. Component of the small ribosomal subunit. The ribosome is a large ribonucleoprotein complex responsible for the synthesis of proteins in the cell. Part of the small subunit (SSU) processome, first precursor of the small eukaryotic ribosomal subunit. During the assembly of the SSU processome in the nucleolus, many ribosome biogenesis factors, an RNA chaperone and ribosomal proteins associate with the nascent pre-rRNA and work in concert to generate RNA folding, modifications, rearrangements and cleavage as well as targeted degradation of pre-ribosomal RNA by the RNA exosome. This chain is Small ribosomal subunit protein uS4, found in Drosophila melanogaster (Fruit fly).